Reading from the N-terminus, the 531-residue chain is Putative lipase ATG15 (531 aa).

At 1–11 the chain is on the cytoplasmic side; the sequence is MKPGIKISKRY. The chain crosses the membrane as a helical; Signal-anchor for type II membrane protein span at residues 12-31; that stretch reads SARNASVITVLLLLIYLIYI. The Lumenal portion of the chain corresponds to 32 to 531; it reads NKETIQTKYQ…WIGICTEYGI (500 aa). Asparagine 178 and asparagine 207 each carry an N-linked (GlcNAc...) asparagine glycan. Residue serine 340 is the Charge relay system of the active site. Residues 482–513 are disordered; that stretch reads VPKKHKSSSSTASSTSAETSTLTVGPSPPEKT. Low complexity predominate over residues 489–502; the sequence is SSSTASSTSAETST.

This sequence belongs to the AB hydrolase superfamily. Lipase family. In terms of assembly, binds to both phosphatidylinositol (PI) and phosphatidylinositol 3,5-bisphosphate (PIP2).

It localises to the endosome. The protein resides in the multivesicular body membrane. The protein localises to the prevacuolar compartment membrane. The catalysed reaction is a triacylglycerol + H2O = a diacylglycerol + a fatty acid + H(+). Lipase which is essential for lysis of subvacuolar cytoplasm to vacuole targeted bodies and intravacuolar autophagic bodies. Involved in the lysis of intravacuolar multivesicular body (MVB) vesicles. The intravacuolar membrane disintegration by ATG15 is critical to life span extension. In Kluyveromyces lactis (strain ATCC 8585 / CBS 2359 / DSM 70799 / NBRC 1267 / NRRL Y-1140 / WM37) (Yeast), this protein is Putative lipase ATG15 (ATG15).